Reading from the N-terminus, the 581-residue chain is Proline--tRNA ligase (581 aa).

This sequence belongs to the class-II aminoacyl-tRNA synthetase family. ProS type 1 subfamily. Homodimer.

The protein resides in the cytoplasm. The catalysed reaction is tRNA(Pro) + L-proline + ATP = L-prolyl-tRNA(Pro) + AMP + diphosphate. Functionally, catalyzes the attachment of proline to tRNA(Pro) in a two-step reaction: proline is first activated by ATP to form Pro-AMP and then transferred to the acceptor end of tRNA(Pro). As ProRS can inadvertently accommodate and process non-cognate amino acids such as alanine and cysteine, to avoid such errors it has two additional distinct editing activities against alanine. One activity is designated as 'pretransfer' editing and involves the tRNA(Pro)-independent hydrolysis of activated Ala-AMP. The other activity is designated 'posttransfer' editing and involves deacylation of mischarged Ala-tRNA(Pro). The misacylated Cys-tRNA(Pro) is not edited by ProRS. In Blochmanniella floridana, this protein is Proline--tRNA ligase.